A 143-amino-acid polypeptide reads, in one-letter code: Large ribosomal subunit protein uL11 (143 aa).

Belongs to the universal ribosomal protein uL11 family. As to quaternary structure, part of the ribosomal stalk of the 50S ribosomal subunit. Interacts with L10 and the large rRNA to form the base of the stalk. L10 forms an elongated spine to which L12 dimers bind in a sequential fashion forming a multimeric L10(L12)X complex. One or more lysine residues are methylated.

Functionally, forms part of the ribosomal stalk which helps the ribosome interact with GTP-bound translation factors. The protein is Large ribosomal subunit protein uL11 of Paracidovorax citrulli (strain AAC00-1) (Acidovorax citrulli).